Consider the following 319-residue polypeptide: ATP-dependent 6-phosphofructokinase (319 aa).

An ATP-binding site is contributed by G11. 21 to 25 lines the ADP pocket; the sequence is RAVVR. ATP-binding positions include 72–73 and 102–105; these read RC and GDGS. D103 is a Mg(2+) binding site. 125-127 is a substrate binding site; sequence TID. D127 acts as the Proton acceptor in catalysis. R154 lines the ADP pocket. Substrate contacts are provided by residues R162 and 169-171; that span reads MGR. ADP is bound by residues 185–187, R211, and 213–215; these read GAE and KKH. Substrate is bound by residues E222, R243, and 249 to 252; that span reads HMQR.

It belongs to the phosphofructokinase type A (PFKA) family. ATP-dependent PFK group I subfamily. Prokaryotic clade 'B1' sub-subfamily. As to quaternary structure, homotetramer. The cofactor is Mg(2+).

It localises to the cytoplasm. The catalysed reaction is beta-D-fructose 6-phosphate + ATP = beta-D-fructose 1,6-bisphosphate + ADP + H(+). It functions in the pathway carbohydrate degradation; glycolysis; D-glyceraldehyde 3-phosphate and glycerone phosphate from D-glucose: step 3/4. Its activity is regulated as follows. Allosterically activated by ADP and other diphosphonucleosides, and allosterically inhibited by phosphoenolpyruvate. In terms of biological role, catalyzes the phosphorylation of D-fructose 6-phosphate to fructose 1,6-bisphosphate by ATP, the first committing step of glycolysis. The chain is ATP-dependent 6-phosphofructokinase from Macrococcus caseolyticus (strain JCSC5402) (Macrococcoides caseolyticum).